We begin with the raw amino-acid sequence, 246 residues long: 2-C-methyl-D-erythritol 4-phosphate cytidylyltransferase (246 aa).

The protein belongs to the IspD/TarI cytidylyltransferase family. IspD subfamily.

The catalysed reaction is 2-C-methyl-D-erythritol 4-phosphate + CTP + H(+) = 4-CDP-2-C-methyl-D-erythritol + diphosphate. Its pathway is isoprenoid biosynthesis; isopentenyl diphosphate biosynthesis via DXP pathway; isopentenyl diphosphate from 1-deoxy-D-xylulose 5-phosphate: step 2/6. Its function is as follows. Catalyzes the formation of 4-diphosphocytidyl-2-C-methyl-D-erythritol from CTP and 2-C-methyl-D-erythritol 4-phosphate (MEP). The sequence is that of 2-C-methyl-D-erythritol 4-phosphate cytidylyltransferase from Chlorobaculum tepidum (strain ATCC 49652 / DSM 12025 / NBRC 103806 / TLS) (Chlorobium tepidum).